The primary structure comprises 525 residues: Cytochrome P450 750A1 (525 aa).

Residues 13–33 (PLPLPAILIATFIFFFSCWIL) traverse the membrane as a helical segment. Cys-465 contributes to the heme binding site.

Belongs to the cytochrome P450 family. The cofactor is heme.

Its subcellular location is the membrane. The sequence is that of Cytochrome P450 750A1 (CYP750A1) from Pinus taeda (Loblolly pine).